The sequence spans 860 residues: Transcription factor E2F8 (860 aa).

Disordered stretches follow at residues 1–27 and 38–57; these read MENQ…PSSK and DLGP…GEPW. Serine 71 and serine 102 each carry phosphoserine. 2 DNA-binding regions span residues 113–182 and 261–347; these read RKEK…TWHG and RKDK…KWTG. Disordered stretches follow at residues 407–433, 532–616, and 745–803; these read RRKI…PPVP, LTPP…PKED, and QMSA…QPVP. Phosphoserine occurs at positions 412 and 416. Composition is skewed to polar residues over residues 412-429 and 542-554; these read SAPS…SQNS and VCPT…TGSK. A compositionally biased stretch (basic and acidic residues) spans 555 to 565; it reads DPTDAPAEKTA.

Belongs to the E2F/DP family. Interacts with HIF1A. Homodimer and heterodimer: mainly forms homodimers and, to a lesser extent, heterodimers with E2F8. Dimerization is important for DNA-binding. Highly expressed in liver, skin, thymus and testis. Expressed in trophoblast giant cells throughout placenta development (at protein level).

The protein localises to the nucleus. In terms of biological role, atypical E2F transcription factor that participates in various processes such as angiogenesis and polyploidization of specialized cells. Mainly acts as a transcription repressor that binds DNA independently of DP proteins and specifically recognizes the E2 recognition site 5'-TTTC[CG]CGC-3'. Directly represses transcription of classical E2F transcription factors such as E2F1: component of a feedback loop in S phase by repressing the expression of E2F1, thereby preventing p53/TP53-dependent apoptosis. Plays a key role in polyploidization of cells in placenta and liver by regulating the endocycle, probably by repressing genes promoting cytokinesis and antagonizing action of classical E2F proteins (E2F1, E2F2 and/or E2F3). Required for placental development by promoting polyploidization of trophoblast giant cells. Acts as a promoter of sprouting angiogenesis, possibly by acting as a transcription activator: associates with HIF1A, recognizes and binds the VEGFA promoter, which is different from canonical E2 recognition site, and activates expression of the VEGFA gene. This is Transcription factor E2F8 (E2f8) from Mus musculus (Mouse).